The sequence spans 228 residues: Sugar fermentation stimulation protein homolog (228 aa).

This sequence belongs to the SfsA family.

The chain is Sugar fermentation stimulation protein homolog from Desulfitobacterium hafniense (strain DSM 10664 / DCB-2).